A 198-amino-acid chain; its full sequence is Synaptobrevin homolog YKT6-A (198 aa).

The Longin domain occupies 8-127 (VLYKGENKVH…IQYNALDSYL (120 aa)). Positions 138-198 (PMSKVQAELD…RKQNSCCDIM (61 aa)) constitute a v-SNARE coiled-coil homology domain. C194 is lipidated: S-palmitoyl cysteine. C195 is subject to Cysteine methyl ester. C195 carries S-farnesyl cysteine lipidation. The propeptide at 196-198 (DIM) is removed in mature form.

Belongs to the synaptobrevin family. Post-translationally, palmitoylated; catalyzes its own palmitoylation. Palmitoylation is required for Golgi targeting. Farnesylation is required for Golgi targeting.

The protein resides in the cytoplasm. The protein localises to the cytosol. It is found in the cytoplasmic vesicle membrane. It localises to the golgi apparatus membrane. Functionally, vesicular soluble NSF attachment protein receptor (v-SNARE) mediating vesicle docking and fusion to a specific acceptor cellular compartment. Functions in endoplasmic reticulum to Golgi transport; as part of a SNARE complex composed of GOSR1, GOSR2 and STX5. Functions in early/recycling endosome to TGN transport; as part of a SNARE complex composed of BET1L, GOSR1 and STX5. Has a S-palmitoyl transferase activity. The protein is Synaptobrevin homolog YKT6-A (ykt6-a) of Xenopus laevis (African clawed frog).